The primary structure comprises 688 residues: MKTRQNKYSIRKFSVGASSILIAALLFMGGGSAQAAEQQQDKGTVENSTTQSIGDGNEKLSEQQSTQNKNVNEKSNVNSITENESLHNETPKNEDWIQQQKDSQNDNKSESVVEQNKENEAFVQNHSEEKPQQEQVELEKHASENNQTLHSKAAQSNEDVKTKPSQLDNTAAKQEDSQKENLSKQDTQSSKTTDLLRATAQNQSKDSQSTEEINKEVNNDTQQVTAKNDDAKVESFNLNSKEEPLKVDKQANPTTDKDKSSKNDKGSQDGLANLESNAVATTNKQSKQQVSEKNEDQTNKSAKQKQYKNNDPIILVHGFNGFTDDINPSVLTHYWGGDKMNIRQDLEENGYEAYEASISAFGSNYDRAVELYYYIKGGRVDYGAAHAAKYGHERYGKTYEGVYKDWKPGQKIHLVGHSMGGQTIRQLEELLRHGNPEEVEYQKQHGGEISPLYQGGHDNMVSSITTLGTPHNGTHASDLLGNEAIVRQLAYDVGKMYGNKDSRVDFGLEHWGLKQKPNESYIQYVKRVQNSKLWKSKDSGLHDLTRDGATDLNRKTSLNPNIVYKTYTGESTHKTLAGKQKADLNMFLPFTITGNLIGKAKEKEWRENDGLVSVISSQHPFNQKYVEATDKNQKGVWQVTPTKHDWDHVDFVGQDSTDTKRTRDELQQFWHGLAEDLVQSEQLTSTNK.

A signal peptide spans 1–35; sequence MKTRQNKYSIRKFSVGASSILIAALLFMGGGSAQA. Positions 31-309 are disordered; it reads GSAQAAEQQQ…KSAKQKQYKN (279 aa). A propeptide spans 36 to 302 (removed in mature form); it reads AEQQQDKGTV…KNEDQTNKSA (267 aa). The span at 45 to 54 shows a compositional bias: polar residues; it reads VENSTTQSIG. The span at 68–79 shows a compositional bias: low complexity; the sequence is NKNVNEKSNVNS. Composition is skewed to basic and acidic residues over residues 84–95 and 103–143; these read ESLHNETPKNED and SQND…KHAS. Polar residues predominate over residues 144-172; sequence ENNQTLHSKAAQSNEDVKTKPSQLDNTAA. Positions 173 to 183 are enriched in basic and acidic residues; the sequence is KQEDSQKENLS. The span at 184 to 211 shows a compositional bias: polar residues; it reads KQDTQSSKTTDLLRATAQNQSKDSQSTE. Basic and acidic residues predominate over residues 240-267; the sequence is SKEEPLKVDKQANPTTDKDKSSKNDKGS. Over residues 274–289 the composition is skewed to polar residues; it reads LESNAVATTNKQSKQQ. S418 functions as the Nucleophile in the catalytic mechanism. Residue D609 is the Charge relay system of the active site. Ca(2+) is bound at residue D647. H648 functions as the Charge relay system in the catalytic mechanism. Residues D650, D655, and D658 each coordinate Ca(2+).

It belongs to the AB hydrolase superfamily. Lipase family.

It is found in the secreted. The catalysed reaction is a triacylglycerol + H2O = a diacylglycerol + a fatty acid + H(+). In Staphylococcus epidermidis (strain ATCC 12228 / FDA PCI 1200), this protein is Lipase (lip).